Reading from the N-terminus, the 204-residue chain is Sex-determining region Y protein (204 aa).

The sufficient for interaction with KPNB1 stretch occupies residues 59 to 136 (RVKRPMNAFI…YKYRPRRKAK (78 aa)). Residues 60-128 (VKRPMNAFIV…MHREKYPNYK (69 aa)) constitute a DNA-binding region (HMG box). Required for nuclear localization stretches follow at residues 61-77 (KRPM…QRRK) and 130-136 (RPRRKAK). The sufficient for interaction with EP300 stretch occupies residues 107–139 (WPFFQEAQKLQAMHREKYPNYKYRPRRKAKMLP). An N6-acetyllysine modification is found at Lys-136. The necessary for interaction with ZNF208 isoform KRAB-O stretch occupies residues 138 to 155 (LPKNCSLLPADPASVLCS). Positions 175 to 204 (RMEHQLGHLPPINAASSPQQRDRYSHWTKL) are disordered. Residues 194–204 (QRDRYSHWTKL) show a composition bias toward basic and acidic residues. The necessary for interaction with SLC9A3R2 stretch occupies residues 198–204 (YSHWTKL).

This sequence belongs to the SRY family. As to quaternary structure, interacts with CALM, EP300, HDAC3, KPNB1, ZNF208 isoform KRAB-O, PARP1, SLC9A3R2 and WT1. The interaction with EP300 modulates its DNA-binding activity. The interaction with KPNB1 is sensitive to dissociation by Ran in the GTP-bound form. Interaction with PARP1 impaired its DNA-binding activity. Post-translationally, phosphorylated on serine residues by PKA. Phosphorylation by PKA enhances its DNA-binding activity and stimulates transcription repression. Acetylation of Lys-136 contributes to its nuclear localization and enhances its interaction with KPNB1. Deacetylated by HDAC3. In terms of processing, poly-ADP-ribosylated by PARP1. ADP-ribosylation reduces its DNA-binding activity.

It is found in the nucleus speckle. Its subcellular location is the cytoplasm. The protein resides in the nucleus. In terms of biological role, transcriptional regulator that controls a genetic switch in male development. It is necessary and sufficient for initiating male sex determination by directing the development of supporting cell precursors (pre-Sertoli cells) as Sertoli rather than granulosa cells. Involved in different aspects of gene regulation including promoter activation or repression. Binds to the DNA consensus sequence 5'-[AT]AACAA[AT]-3'. SRY HMG box recognizes DNA by partial intercalation in the minor groove and promotes DNA bending. Also involved in pre-mRNA splicing. In male adult brain involved in the maintenance of motor functions of dopaminergic neurons. In Homo sapiens (Human), this protein is Sex-determining region Y protein.